The primary structure comprises 361 residues: 5-formaminoimidazole-4-carboxamide-1-(beta)-D-ribofuranosyl 5'-monophosphate synthetase (361 aa).

Residues His27 and Ser94 each coordinate 5-amino-1-(5-phospho-beta-D-ribosyl)imidazole-4-carboxamide. The ATP-grasp domain maps to Arg116–Lys348. ATP is bound by residues Pro146 to Cys208 and Glu230. Asn258 serves as a coordination point for 5-amino-1-(5-phospho-beta-D-ribosyl)imidazole-4-carboxamide. Mg(2+) contacts are provided by Gln297 and Glu310.

This sequence belongs to the phosphohexose mutase family. The cofactor is Mg(2+). It depends on Mn(2+) as a cofactor.

The enzyme catalyses 5-amino-1-(5-phospho-beta-D-ribosyl)imidazole-4-carboxamide + formate + ATP = 5-formamido-1-(5-phospho-D-ribosyl)imidazole-4-carboxamide + ADP + phosphate. It participates in purine metabolism; IMP biosynthesis via de novo pathway; 5-formamido-1-(5-phospho-D-ribosyl)imidazole-4-carboxamide from 5-amino-1-(5-phospho-D-ribosyl)imidazole-4-carboxamide (formate route): step 1/1. Functionally, catalyzes the ATP- and formate-dependent formylation of 5-aminoimidazole-4-carboxamide-1-beta-d-ribofuranosyl 5'-monophosphate (AICAR) to 5-formaminoimidazole-4-carboxamide-1-beta-d-ribofuranosyl 5'-monophosphate (FAICAR) in the absence of folates. This Methanococcus maripaludis (strain DSM 14266 / JCM 13030 / NBRC 101832 / S2 / LL) protein is 5-formaminoimidazole-4-carboxamide-1-(beta)-D-ribofuranosyl 5'-monophosphate synthetase.